The chain runs to 178 residues: Signal peptidase complex subunit 2 (178 aa).

Residues 1 to 37 (MSSAKPINVYSIPELNQALDEALPSVFARLNYERSYA) lie on the Cytoplasmic side of the membrane. The helical transmembrane segment at 38 to 58 (LLDAKLYIGYSIAVVAGLSFF) threads the bilayer. Residues 59-67 (LDKKFERDQ) lie on the Lumenal side of the membrane. Residues 68 to 88 (IVTYQKLLVGAYFVLSLLFWY) form a helical membrane-spanning segment. Over 89–178 (FSRFIEKGTV…HNVLDTKKNE (90 aa)) the chain is Cytoplasmic.

It belongs to the SPCS2 family. As to quaternary structure, component of the signal peptidase complex (SPC) composed of a catalytic subunit SEC11 and three accessory subunits SPC1, SPC2 and SPC3. The complex induces a local thinning of the ER membrane which is used to measure the length of the signal peptide (SP) h-region of protein substrates. This ensures the selectivity of the complex towards h-regions shorter than 18-20 amino acids. SPC associates with the translocon complex. Interacts with SBH1 and SEB2/SBH2.

The protein localises to the endoplasmic reticulum membrane. Its function is as follows. Component of the signal peptidase complex (SPC) which catalyzes the cleavage of N-terminal signal sequences from nascent proteins as they are translocated into the lumen of the endoplasmic reticulum. Enhances the enzymatic activity of SPC and facilitates the interactions between different components of the translocation site. The chain is Signal peptidase complex subunit 2 (SPC2) from Saccharomyces cerevisiae (strain ATCC 204508 / S288c) (Baker's yeast).